Reading from the N-terminus, the 160-residue chain is MFSSSIRLIVSGFHRTQPLKSPVNSPSVFISVPKFFNSESKSTGTGSRSVAMSSVEKTGSDSGAIENRASRMREKLQKELEPVELVIEDVSYQHAGHAGMKGRTDDETHFNVKIVSKGFEGMNLVKRHRLVYHLLREELDTGLHALSIVSKTPSESPSKD.

A chloroplast-targeting transit peptide spans 1-50; that stretch reads MFSSSIRLIVSGFHRTQPLKSPVNSPSVFISVPKFFNSESKSTGTGSRSV. The span at 39 to 61 shows a compositional bias: polar residues; sequence ESKSTGTGSRSVAMSSVEKTGSD. Residues 39 to 66 form a disordered region; it reads ESKSTGTGSRSVAMSSVEKTGSDSGAIE.

This sequence belongs to the bolA/yrbA family. As to quaternary structure, interacts in vitro with GRXS14, GRXS15, GRXS16 and GRXS17, but not with GRXC5. Interacts in vivo only with GRXS14 and GRXS16.

The protein localises to the plastid. It is found in the chloroplast. Functionally, may act either alone or in interaction with glutaredoxin as a redox-regulated transcriptional regulator, or as a factor regulating Fe-S cluster biogenesis. The glutaredoxin-BOLA1 heterodimers bind a labile, oxygen sensitive iron-sulfur cluster. The sequence is that of Protein BOLA1, chloroplastic from Arabidopsis thaliana (Mouse-ear cress).